The sequence spans 332 residues: Beta-hexosaminidase (332 aa).

Substrate contacts are provided by residues aspartate 62, arginine 70, arginine 131, and 161 to 162 (KH). The Proton donor/acceptor role is filled by histidine 174. The active-site Nucleophile is the aspartate 244.

Belongs to the glycosyl hydrolase 3 family. NagZ subfamily.

It is found in the cytoplasm. The enzyme catalyses Hydrolysis of terminal non-reducing N-acetyl-D-hexosamine residues in N-acetyl-beta-D-hexosaminides.. The protein operates within cell wall biogenesis; peptidoglycan recycling. Its function is as follows. Plays a role in peptidoglycan recycling by cleaving the terminal beta-1,4-linked N-acetylglucosamine (GlcNAc) from peptide-linked peptidoglycan fragments, giving rise to free GlcNAc, anhydro-N-acetylmuramic acid and anhydro-N-acetylmuramic acid-linked peptides. This chain is Beta-hexosaminidase, found in Pseudomonas aeruginosa (strain LESB58).